The primary structure comprises 20 residues: MEVGKLGKPYPLLNLAYVGV.

This is Protein YfiS from Escherichia coli (strain K12).